The following is a 477-amino-acid chain: Ribulose bisphosphate carboxylase large chain (477 aa).

The propeptide occupies 1 to 2; that stretch reads MS. Proline 3 is modified (N-acetylproline). Lysine 14 bears the N6,N6,N6-trimethyllysine mark. Asparagine 123 and threonine 173 together coordinate substrate. Catalysis depends on lysine 175, which acts as the Proton acceptor. Lysine 177 is a substrate binding site. Residues lysine 201, aspartate 203, and glutamate 204 each contribute to the Mg(2+) site. Lysine 201 bears the N6-carboxylysine mark. Histidine 294 serves as the catalytic Proton acceptor. Positions 295, 327, and 379 each coordinate substrate.

This sequence belongs to the RuBisCO large chain family. Type I subfamily. In terms of assembly, heterohexadecamer of 8 large chains and 8 small chains; disulfide-linked. The disulfide link is formed within the large subunit homodimers. The cofactor is Mg(2+). The disulfide bond which can form in the large chain dimeric partners within the hexadecamer appears to be associated with oxidative stress and protein turnover.

The protein resides in the plastid. It localises to the chloroplast. It carries out the reaction 2 (2R)-3-phosphoglycerate + 2 H(+) = D-ribulose 1,5-bisphosphate + CO2 + H2O. The catalysed reaction is D-ribulose 1,5-bisphosphate + O2 = 2-phosphoglycolate + (2R)-3-phosphoglycerate + 2 H(+). Its function is as follows. RuBisCO catalyzes two reactions: the carboxylation of D-ribulose 1,5-bisphosphate, the primary event in carbon dioxide fixation, as well as the oxidative fragmentation of the pentose substrate in the photorespiration process. Both reactions occur simultaneously and in competition at the same active site. The polypeptide is Ribulose bisphosphate carboxylase large chain (Atropa belladonna (Belladonna)).